Here is a 602-residue protein sequence, read N- to C-terminus: Sodium- and chloride-dependent GABA transporter 2 (602 aa).

Topologically, residues 1–40 (MENRASGTTSNGETKPVCPAMEKVEEDGTLEREHWNNKME) are cytoplasmic. 3 helical membrane passes run 41-61 (FVLS…FPYL), 68-88 (GAFF…VFFL), and 121-141 (IVSL…FYLF). The Extracellular portion of the chain corresponds to 142-206 (SSFTTDLPWG…GIQHLGSLRW (65 aa)). Cysteine 153 and cysteine 162 are oxidised to a cystine. 3 N-linked (GlcNAc...) asparagine glycosylation sites follow: asparagine 169, asparagine 173, and asparagine 178. The next 2 membrane-spanning stretches (helical) occupy residues 207–227 (ELVL…WKGV) and 233–253 (VVYF…IRGV). Asparagine 269 carries N-linked (GlcNAc...) asparagine glycosylation. Helical transmembrane passes span 282 to 302 (AGTQ…ALGS), 319 to 339 (ILNS…LGFM), 366 to 386 (VVML…VVLL), 418 to 438 (VLIL…LTEG), 453 to 473 (GMCL…VYGA), 490 to 510 (PLIK…TFLF), and 528 to 548 (WWGD…IPAW). Residues 549–602 (SIYKLRTLKGPLRERLRQLVCPAEDLPQKNQPEPTAPATPMTSLLRLTELESNC) are Cytoplasmic-facing. At threonine 587 the chain carries Phosphothreonine. Phosphoserine is present on serine 591.

This sequence belongs to the sodium:neurotransmitter symporter (SNF) (TC 2.A.22) family. SLC6A13 subfamily. In terms of tissue distribution, expressed at high levels in liver, followed by kidney and leptomeninges, and very low levels in the cerebellum (at protein level). In the brain, detected in some blood vessels (at protein level). In the kidney, expressed in the cortex, including parts of the proximal tubules, but not in the medulla (at protein level). In the liver, highest expression in periportal hepatocytes, with highest density at the vascular side (at protein level). Also detected at low levels in other organs, including skeletal muscle.

It is found in the cell membrane. The protein localises to the basolateral cell membrane. It carries out the reaction 4-aminobutanoate(out) + chloride(out) + 2 Na(+)(out) = 4-aminobutanoate(in) + chloride(in) + 2 Na(+)(in). The catalysed reaction is taurine(out) + chloride(out) + 2 Na(+)(out) = taurine(in) + chloride(in) + 2 Na(+)(in). It catalyses the reaction beta-alanine(out) + chloride(out) + 2 Na(+)(out) = beta-alanine(in) + chloride(in) + 2 Na(+)(in). The enzyme catalyses hypotaurine(out) + chloride(out) + 2 Na(+)(out) = hypotaurine(in) + chloride(in) + 2 Na(+)(in). With respect to regulation, gamma-aminobutyric acid (GABA) transport is inhibited by beta-alanine, taurine, hypotaurine, beta-guanidinopropionic acid, 2,3-diaminopropionic acid, guvacine and nipecotic acid. Beta-alanine transport is inhibited by GABA. Taurine transport is inhibited by GABA, beta-alanine, SNAP-5114, nigericin, nipecotic acid and ouabain. Its function is as follows. Mediates sodium- and chloride-dependent transport of gamma-aminobutyric acid (GABA). Can also mediate transport of beta-alanine, taurine and hypotaurine and is the major taurine transporter in hepatocytes. This chain is Sodium- and chloride-dependent GABA transporter 2 (Slc6a13), found in Mus musculus (Mouse).